Here is a 210-residue protein sequence, read N- to C-terminus: Putative tyrosine-protein phosphatase OCA1 (210 aa).

A Tyrosine-protein phosphatase domain is found at 44-204; it reads NFCPVERYLY…EIDREKAPNW (161 aa). C140 serves as the catalytic Phosphocysteine intermediate.

This sequence belongs to the protein-tyrosine phosphatase family.

The protein resides in the cytoplasm. It catalyses the reaction O-phospho-L-tyrosyl-[protein] + H2O = L-tyrosyl-[protein] + phosphate. Putative tyrosine-protein phosphatase required for protection against superoxide stress. This is Putative tyrosine-protein phosphatase OCA1 (OCA1) from Kluyveromyces lactis (strain ATCC 8585 / CBS 2359 / DSM 70799 / NBRC 1267 / NRRL Y-1140 / WM37) (Yeast).